Consider the following 218-residue polypeptide: Eukaryotic translation initiation factor 4E-1 (218 aa).

Positions 1-11 (MQTEQPPKESQ) are enriched in basic and acidic residues. 2 disordered regions span residues 1-20 (MQTEQPPKESQTENTVSEPQ) and 198-218 (FSAHEDSSKSGSTRAKTRMSV). Residues 206 to 218 (KSGSTRAKTRMSV) show a composition bias toward polar residues.

This sequence belongs to the eukaryotic initiation factor 4E family. In terms of assembly, eIF4F is a multi-subunit complex, the composition of which varies with external and internal environmental conditions. It is composed of at least eIF4A, eIF4E and eIF4G. eIF4E is also known to interact with other partners.

Its function is as follows. Recognizes and binds the 7-methylguanosine-containing mRNA cap during an early step in the initiation of protein synthesis and facilitates ribosome binding by inducing the unwinding of the mRNAs secondary structures. This is Eukaryotic translation initiation factor 4E-1 (tif451) from Schizosaccharomyces pombe (strain 972 / ATCC 24843) (Fission yeast).